A 743-amino-acid chain; its full sequence is DEAD-box ATP-dependent RNA helicase 3B, chloroplastic (743 aa).

Residues 1-37 constitute a chloroplast transit peptide; the sequence is MASLTLPALALALSNPGAVRLRAAAFRCWALRRRGWA. A disordered region spans residues 60-79; the sequence is GSDDEDGEGPYGSDADEGFE. A compositionally biased stretch (acidic residues) spans 61-79; that stretch reads SDDEDGEGPYGSDADEGFE. The Q motif motif lies at 88–116; sequence LAIARLGLPDELVATLEKRGITHLFPIQR. The 177-residue stretch at 119-295 folds into the Helicase ATP-binding domain; sequence LIPALEGRDL…RRYLNNPLTI (177 aa). 132-139 lines the ATP pocket; that stretch reads AKTGTGKT. A DEAD box motif is present at residues 243–246; it reads DEAD. The 146-residue stretch at 324–469 folds into the Helicase C-terminal domain; it reads VLSDLITVYA…ISPPSIEEVL (146 aa). Positions 606–719 are disordered; sequence LTKISKLPAL…RSSSFGGRES (114 aa). A compositionally biased stretch (gly residues) spans 642 to 653; it reads GGGASRGRGGWD. Positions 657–671 are enriched in basic and acidic residues; that stretch reads EDRFRRGGRSLRSDN. Positions 688–719 are enriched in low complexity; the sequence is RSSSFGSRSSSYSSRGSPSFGGRSSSFGGRES. The CCHC-type zinc finger occupies 725–742; sequence GACFNCGESGHRATDCPN.

The protein belongs to the DEAD box helicase family. DDX21/DDX50 subfamily.

It localises to the plastid. The protein resides in the chloroplast stroma. The catalysed reaction is ATP + H2O = ADP + phosphate + H(+). Its function is as follows. Nuclear genome-encoded factor involved in ribosome biogenesis in chloroplasts. Binds specific group II introns in chloroplasts and facilitates their splicing. Is required for rRNA maturation in plastids and may contribute to the assembly of the large (50S) ribosomal subunit. Required for normal development of chloroplasts. The sequence is that of DEAD-box ATP-dependent RNA helicase 3B, chloroplastic from Zea mays (Maize).